The primary structure comprises 208 residues: Large ribosomal subunit protein uL4 (208 aa).

Residues 45-89 are disordered; the sequence is RQGTHAHKNRSAVSGGGKKPWRQKGTGRARQGSTRSPQWRGGGTV.

It belongs to the universal ribosomal protein uL4 family. As to quaternary structure, part of the 50S ribosomal subunit.

Its function is as follows. One of the primary rRNA binding proteins, this protein initially binds near the 5'-end of the 23S rRNA. It is important during the early stages of 50S assembly. It makes multiple contacts with different domains of the 23S rRNA in the assembled 50S subunit and ribosome. Forms part of the polypeptide exit tunnel. This chain is Large ribosomal subunit protein uL4, found in Lactococcus lactis subsp. lactis (strain IL1403) (Streptococcus lactis).